A 248-amino-acid chain; its full sequence is Ubiquinone/menaquinone biosynthesis C-methyltransferase UbiE (248 aa).

Residues Thr-71, Asp-92, and 120–121 each bind S-adenosyl-L-methionine; that span reads DA.

Belongs to the class I-like SAM-binding methyltransferase superfamily. MenG/UbiE family.

It catalyses the reaction a 2-demethylmenaquinol + S-adenosyl-L-methionine = a menaquinol + S-adenosyl-L-homocysteine + H(+). The catalysed reaction is a 2-methoxy-6-(all-trans-polyprenyl)benzene-1,4-diol + S-adenosyl-L-methionine = a 5-methoxy-2-methyl-3-(all-trans-polyprenyl)benzene-1,4-diol + S-adenosyl-L-homocysteine + H(+). It functions in the pathway quinol/quinone metabolism; menaquinone biosynthesis; menaquinol from 1,4-dihydroxy-2-naphthoate: step 2/2. The protein operates within cofactor biosynthesis; ubiquinone biosynthesis. Functionally, methyltransferase required for the conversion of demethylmenaquinol (DMKH2) to menaquinol (MKH2) and the conversion of 2-polyprenyl-6-methoxy-1,4-benzoquinol (DDMQH2) to 2-polyprenyl-3-methyl-6-methoxy-1,4-benzoquinol (DMQH2). This Methylococcus capsulatus (strain ATCC 33009 / NCIMB 11132 / Bath) protein is Ubiquinone/menaquinone biosynthesis C-methyltransferase UbiE.